The following is a 517-amino-acid chain: Ribonuclease Y (517 aa).

Residues 2 to 22 (EILVYIIIGIAIFILSLLVGI) traverse the membrane as a helical segment. The KH domain maps to 207 to 267 (TTSTVALPTD…LRREIAKRTL (61 aa)). The HD domain occupies 333 to 426 (VLEHSIEVAQ…VAASDALSAS (94 aa)).

Belongs to the RNase Y family.

The protein localises to the cell membrane. In terms of biological role, endoribonuclease that initiates mRNA decay. In Petrotoga mobilis (strain DSM 10674 / SJ95), this protein is Ribonuclease Y.